The primary structure comprises 1709 residues: Intraflagellar transport protein 122 (1709 aa).

2 WD repeats span residues 51 to 89 and 132 to 171; these read TQHP…ALFK and SFKG…LNSC. Residues 209–229 form a disordered region; sequence TIPQTVTPSASASGRSGSGKR. A WD 3 repeat occupies 634–673; it reads LHRSPIVSLDISPDRKYISVVDRSDVVSVYKFLDDSEIVL. An LRR 1 repeat occupies 1231–1256; the sequence is IEALERLRLSGNTSKEAIIIKQLIDA. The disordered stretch occupies residues 1378 to 1404; the sequence is LSGEDTVKASSQRSKKDNPPSLRSTIG. The stretch at 1414–1436 is one LRR 2 repeat; the sequence is LGSLAHIDLGINNMNIPPGISEL.

Its subcellular location is the cell projection. It localises to the cilium. The protein resides in the flagellum. The protein localises to the cytoplasm. It is found in the cytoskeleton. Its subcellular location is the flagellum axoneme. It localises to the flagellum basal body. Component of the intraflagellar transport complex A (IFT-A) involved in flagellar assembly. This Giardia intestinalis (strain ATCC 50803 / WB clone C6) (Giardia lamblia) protein is Intraflagellar transport protein 122.